Consider the following 83-residue polypeptide: Small ribosomal subunit protein bS16 (83 aa).

It belongs to the bacterial ribosomal protein bS16 family.

This Thermosynechococcus vestitus (strain NIES-2133 / IAM M-273 / BP-1) protein is Small ribosomal subunit protein bS16.